A 297-amino-acid polypeptide reads, in one-letter code: Ribosomal protein L11 methyltransferase (297 aa).

Thr-152, Gly-173, Asp-195, and Asn-234 together coordinate S-adenosyl-L-methionine.

The protein belongs to the methyltransferase superfamily. PrmA family.

The protein resides in the cytoplasm. The enzyme catalyses L-lysyl-[protein] + 3 S-adenosyl-L-methionine = N(6),N(6),N(6)-trimethyl-L-lysyl-[protein] + 3 S-adenosyl-L-homocysteine + 3 H(+). Functionally, methylates ribosomal protein L11. In Cupriavidus taiwanensis (strain DSM 17343 / BCRC 17206 / CCUG 44338 / CIP 107171 / LMG 19424 / R1) (Ralstonia taiwanensis (strain LMG 19424)), this protein is Ribosomal protein L11 methyltransferase.